The sequence spans 423 residues: Pentamidine resistance factor, mitochondrial (423 aa).

Residues 199–219 traverse the membrane as a helical segment; sequence PVFFTLVFIFEEVSVLIFTFF.

Interacts with COX18. This interaction may be essential for its insertion into mitochondrial inner membrane.

It is found in the mitochondrion inner membrane. Its function is as follows. Probably involved in mitochondrial export. Confers resistance to the anti-pneumocystis carinii drug pentamidine. May act by the removal of pentamidine, or its damage targets, from the matrix by an active-transport mechanism. The sequence is that of Pentamidine resistance factor, mitochondrial (PNT1) from Saccharomyces cerevisiae (strain ATCC 204508 / S288c) (Baker's yeast).